The chain runs to 332 residues: 2,3-diketo-L-gulonate reductase (332 aa).

Residue His-44 is the Proton donor of the active site. NAD(+) contacts are provided by residues 168 to 174 (ITMVDMS), 224 to 225 (WK), and 304 to 306 (GHE).

Belongs to the LDH2/MDH2 oxidoreductase family. DlgD subfamily. Homodimer.

It is found in the cytoplasm. The enzyme catalyses 3-dehydro-L-gulonate + NAD(+) = 2,3-dioxo-L-gulonate + NADH + H(+). It carries out the reaction 3-dehydro-L-gulonate + NADP(+) = 2,3-dioxo-L-gulonate + NADPH + H(+). Catalyzes the reduction of 2,3-diketo-L-gulonate in the presence of NADH, to form 3-keto-L-gulonate. This Escherichia coli O17:K52:H18 (strain UMN026 / ExPEC) protein is 2,3-diketo-L-gulonate reductase.